Consider the following 61-residue polypeptide: Protein translocase subunit SecE (61 aa).

Residues 39–59 (VGIIIIGLIGFILSIVSQVLF) form a helical membrane-spanning segment.

The protein belongs to the SecE/SEC61-gamma family. Component of the Sec protein translocase complex. Heterotrimer consisting of SecY (alpha), SecG (beta) and SecE (gamma) subunits. The heterotrimers can form oligomers, although 1 heterotrimer is thought to be able to translocate proteins. Interacts with the ribosome. May interact with SecDF, and other proteins may be involved.

The protein localises to the cell membrane. Its function is as follows. Essential subunit of the Sec protein translocation channel SecYEG. Clamps together the 2 halves of SecY. May contact the channel plug during translocation. This is Protein translocase subunit SecE from Methanosphaera stadtmanae (strain ATCC 43021 / DSM 3091 / JCM 11832 / MCB-3).